A 322-amino-acid polypeptide reads, in one-letter code: Allergen Asp f 4 (322 aa).

A signal peptide spans 1 to 20 (MQLKNSMLLLTALAAGSSVA). Low complexity predominate over residues 80-105 (AAAAAASTPEPSSSHSDSSSSSGVSA). The disordered stretch occupies residues 80–109 (AAAAAASTPEPSSSHSDSSSSSGVSADWTN).

It localises to the secreted. This chain is Allergen Asp f 4, found in Aspergillus fumigatus (strain ATCC MYA-4609 / CBS 101355 / FGSC A1100 / Af293) (Neosartorya fumigata).